Reading from the N-terminus, the 33-residue chain is ALWKTMLKKLGTVALHAGKAALGAAADTISQGA.

A33 carries the post-translational modification Alanine amide.

Expressed by the parotoid glands.

Its subcellular location is the secreted. Its function is as follows. Possesses a potent antimicrobial activity against bacteria, fungi and protozoa. Probably acts by disturbing membrane functions with its amphipathic structure. In Phyllomedusa burmeisteri (Brazilian common walking leaf frog), this protein is Dermaseptin DS VIII-like peptide.